Reading from the N-terminus, the 165-residue chain is Large ribosomal subunit protein uL11A (165 aa).

Arg-67 carries the post-translational modification N5-methylarginine.

The protein belongs to the universal ribosomal protein uL11 family. As to quaternary structure, component of the large ribosomal subunit (LSU). Mature yeast ribosomes consist of a small (40S) and a large (60S) subunit. The 40S small subunit contains 1 molecule of ribosomal RNA (18S rRNA) and at least 33 different proteins. The large 60S subunit contains 3 rRNA molecules (25S, 5.8S and 5S rRNA) and at least 46 different proteins.

The protein resides in the cytoplasm. It is found in the nucleus. Its subcellular location is the nucleolus. Functionally, this protein binds directly to 26S ribosomal RNA. In terms of biological role, component of the ribosome, a large ribonucleoprotein complex responsible for the synthesis of proteins in the cell. The small ribosomal subunit (SSU) binds messenger RNAs (mRNAs) and translates the encoded message by selecting cognate aminoacyl-transfer RNA (tRNA) molecules. The large subunit (LSU) contains the ribosomal catalytic site termed the peptidyl transferase center (PTC), which catalyzes the formation of peptide bonds, thereby polymerizing the amino acids delivered by tRNAs into a polypeptide chain. The nascent polypeptides leave the ribosome through a tunnel in the LSU and interact with protein factors that function in enzymatic processing, targeting, and the membrane insertion of nascent chains at the exit of the ribosomal tunnel. The protein is Large ribosomal subunit protein uL11A (rpl1201) of Schizosaccharomyces pombe (strain 972 / ATCC 24843) (Fission yeast).